Here is a 113-residue protein sequence, read N- to C-terminus: MGGLEPCSRLLLLPLLLAVGGLRPVQAQAQSDCSCSTVSPGVLAGIVLGDLVLTVLIALAVYFLGRLVPRGRGAAEAATRKQRITETESPYQELQGQRSDVYSDLNTQRPYYK.

The first 27 residues, 1–27, serve as a signal peptide directing secretion; it reads MGGLEPCSRLLLLPLLLAVGGLRPVQA. At 28–40 the chain is on the extracellular side; that stretch reads QAQSDCSCSTVSP. The chain crosses the membrane as a helical span at residues 41–61; it reads GVLAGIVLGDLVLTVLIALAV. Asp50 lines the Ca(2+) pocket. At 62–113 the chain is on the cytoplasmic side; it reads YFLGRLVPRGRGAAEAATRKQRITETESPYQELQGQRSDVYSDLNTQRPYYK. Residues 75 to 113 form a disordered region; that stretch reads AEAATRKQRITETESPYQELQGQRSDVYSDLNTQRPYYK. The ITAM domain occupies 80 to 108; sequence RKQRITETESPYQELQGQRSDVYSDLNTQ. Positions 87 to 113 are enriched in polar residues; sequence TESPYQELQGQRSDVYSDLNTQRPYYK. 2 positions are modified to phosphotyrosine: Tyr91 and Tyr102.

Belongs to the TYROBP family. In terms of assembly, homodimer; disulfide-linked. Homotrimer; disulfide-linked. Homotetramer; disulfide-linked. Homotrimers and homotetramers form when low levels of partner receptors are available and is competitive with assembly with interacting receptors. They may represent alternative oligomerization states or may be intermediates in the receptor assembly process. Binding of a metal cation aids in homooligomerization through coordination of the metal ion by the subunits of the oligomer. Interacts with TREM1. Interacts with TREM2. Interacts with CLECSF5. Interacts with CD300LB and CD300C2. Interacts with CD300E. Interacts (via ITAM domain) with SYK (via SH2 domains); activates SYK mediating neutrophils and macrophages integrin-mediated activation. Interacts with KLRC2. Interacts with CD300H. Interacts with KLRD1. In terms of processing, following ligand binding by associated receptors, tyrosine phosphorylated in the ITAM domain which leads to activation of additional tyrosine kinases and subsequent cell activation.

The protein localises to the cell membrane. Functionally, adapter protein which non-covalently associates with activating receptors found on the surface of a variety of immune cells to mediate signaling and cell activation following ligand binding by the receptors. TYROBP is tyrosine-phosphorylated in the ITAM domain following ligand binding by the associated receptors which leads to activation of additional tyrosine kinases and subsequent cell activation. Also has an inhibitory role in some cells. Non-covalently associates with activating receptors of the CD300 family to mediate cell activation. Also mediates cell activation through association with activating receptors of the CD200R family. Required for neutrophil activation mediated by integrin. Required for the activation of myeloid cells mediated by the CLEC5A/MDL1 receptor. Associates with natural killer (NK) cell receptors such as the KLRD1/KLRC2 heterodimer to mediate NK cell activation. Associates with TREM1 to mediate activation of neutrophils and monocytes. Associates with TREM2 on monocyte-derived dendritic cells to mediate up-regulation of chemokine receptor CCR7 and dendritic cell maturation and survival. Association with TREM2 mediates cytokine-induced formation of multinucleated giant cells which are formed by the fusion of macrophages. Stabilizes the TREM2 C-terminal fragment (TREM2-CTF) produced by TREM2 ectodomain shedding which suppresses the release of pro-inflammatory cytokines. In microglia, required with TREM2 for phagocytosis of apoptotic neurons. Required with ITGAM/CD11B in microglia to control production of microglial superoxide ions which promote the neuronal apoptosis that occurs during brain development. Promotes pro-inflammatory responses in microglia following nerve injury which accelerates degeneration of injured neurons. Positively regulates the expression of the IRAK3/IRAK-M kinase and IL10 production by liver dendritic cells and inhibits their T cell allosimulatory ability. Negatively regulates B cell proliferation. Required for CSF1-mediated osteoclast cytoskeletal organization. Positively regulates multinucleation during osteoclast development. The chain is TYRO protein tyrosine kinase-binding protein from Macaca mulatta (Rhesus macaque).